Here is a 264-residue protein sequence, read N- to C-terminus: Indole-3-glycerol phosphate synthase (264 aa).

Belongs to the TrpC family.

The enzyme catalyses 1-(2-carboxyphenylamino)-1-deoxy-D-ribulose 5-phosphate + H(+) = (1S,2R)-1-C-(indol-3-yl)glycerol 3-phosphate + CO2 + H2O. The protein operates within amino-acid biosynthesis; L-tryptophan biosynthesis; L-tryptophan from chorismate: step 4/5. The chain is Indole-3-glycerol phosphate synthase from Lactococcus lactis subsp. cremoris (strain MG1363).